Here is a 275-residue protein sequence, read N- to C-terminus: Myoblast determination protein 1 homolog (275 aa).

A bHLH domain is found at 84–135 (DRRKAATMRERRRLSKVNDAFETLKRCTSTNPNQRLPKVEILRNAISYIESL). Positions 234–275 (EGHEESPCSPHEGSVLSDTGTTAPSPTSCPQQQAQETIYQVL) are disordered. Over residues 249-275 (LSDTGTTAPSPTSCPQQQAQETIYQVL) the composition is skewed to polar residues.

Efficient DNA binding requires dimerization with another bHLH protein. As to expression, from mid-gastrula to just before somite formation, expressed in cells adjacent to axial mesoderm. Subsequently, during the anterior-to-posterior wave of somite formation and maturation, expressed within particular regions of each somite. Expressed in both muscle and non-muscle cells.

The protein resides in the nucleus. In terms of biological role, may act as a transcriptional activator that promotes transcription of muscle-specific target genes and plays a role in muscle differentiation. This is Myoblast determination protein 1 homolog (myod1) from Danio rerio (Zebrafish).